Reading from the N-terminus, the 195-residue chain is Holliday junction branch migration complex subunit RuvA (195 aa).

The segment at 1-61 (MYEYLDGVVV…ENDQTLYGFK (61 aa)) is domain I. A domain II region spans residues 62 to 139 (KAEDKELFLN…AVENEVGTLF (78 aa)). Residues 139 to 143 (FDLST) form a flexible linker region. Residues 144–195 (TSNQALDEALEALIALGYSEKEVKKLTKKLSEQTDRTTDQYISSGLKLLMKG) form a domain III region.

The protein belongs to the RuvA family. Homotetramer. Forms an RuvA(8)-RuvB(12)-Holliday junction (HJ) complex. HJ DNA is sandwiched between 2 RuvA tetramers; dsDNA enters through RuvA and exits via RuvB. An RuvB hexamer assembles on each DNA strand where it exits the tetramer. Each RuvB hexamer is contacted by two RuvA subunits (via domain III) on 2 adjacent RuvB subunits; this complex drives branch migration. In the full resolvosome a probable DNA-RuvA(4)-RuvB(12)-RuvC(2) complex forms which resolves the HJ.

The protein localises to the cytoplasm. Functionally, the RuvA-RuvB-RuvC complex processes Holliday junction (HJ) DNA during genetic recombination and DNA repair, while the RuvA-RuvB complex plays an important role in the rescue of blocked DNA replication forks via replication fork reversal (RFR). RuvA specifically binds to HJ cruciform DNA, conferring on it an open structure. The RuvB hexamer acts as an ATP-dependent pump, pulling dsDNA into and through the RuvAB complex. HJ branch migration allows RuvC to scan DNA until it finds its consensus sequence, where it cleaves and resolves the cruciform DNA. This chain is Holliday junction branch migration complex subunit RuvA, found in Pediococcus pentosaceus (strain ATCC 25745 / CCUG 21536 / LMG 10740 / 183-1w).